The following is a 28-amino-acid chain: uORF1 protein (28 aa).

The protein localises to the host cytoplasm. It localises to the host cytoskeleton. Its function is as follows. Plays a role in the reorganization of host microtubules and intermediate filaments to form a cytoskeletal cage that surrounds the viral factories, protecting the site of viral replication. May play a role in viral infection of human cortical neurons. The polypeptide is uORF1 protein (Zika virus (isolate ZIKV/Human/French Polynesia/10087PF/2013) (ZIKV)).